We begin with the raw amino-acid sequence, 152 residues long: Large ribosomal subunit protein uL15 (152 aa).

Positions Met1–Gly66 are disordered. Positions Glu24–Asn36 are enriched in gly residues.

This sequence belongs to the universal ribosomal protein uL15 family. As to quaternary structure, part of the 50S ribosomal subunit.

In terms of biological role, binds to the 23S rRNA. The sequence is that of Large ribosomal subunit protein uL15 from Akkermansia muciniphila (strain ATCC BAA-835 / DSM 22959 / JCM 33894 / BCRC 81048 / CCUG 64013 / CIP 107961 / Muc).